Here is a 278-residue protein sequence, read N- to C-terminus: Indole-3-glycerol phosphate synthase (278 aa).

The protein belongs to the TrpC family.

The catalysed reaction is 1-(2-carboxyphenylamino)-1-deoxy-D-ribulose 5-phosphate + H(+) = (1S,2R)-1-C-(indol-3-yl)glycerol 3-phosphate + CO2 + H2O. Its pathway is amino-acid biosynthesis; L-tryptophan biosynthesis; L-tryptophan from chorismate: step 4/5. The polypeptide is Indole-3-glycerol phosphate synthase (trpC) (Pseudomonas aeruginosa (strain ATCC 15692 / DSM 22644 / CIP 104116 / JCM 14847 / LMG 12228 / 1C / PRS 101 / PAO1)).